A 380-amino-acid polypeptide reads, in one-letter code: E3 ubiquitin-protein ligase RNF13 (380 aa).

The first 34 residues, M1 to A34, serve as a signal peptide directing secretion. Residues D35–Y182 are Lumenal-facing. Positions L64–D160 constitute a PA domain. N-linked (GlcNAc...) asparagine glycosylation occurs at N88. Residues Y183 to I203 form a helical membrane-spanning segment. The Cytoplasmic portion of the chain corresponds to T204–V380. An RING-type; atypical zinc finger spans residues C240–K282. The tract at residues V285–V380 is disordered. The segment covering S338–E356 has biased composition (acidic residues).

Interacts with ERN1. Autoubiquitinated.

It localises to the endoplasmic reticulum membrane. The protein resides in the late endosome membrane. The protein localises to the lysosome membrane. It is found in the nucleus inner membrane. The catalysed reaction is S-ubiquitinyl-[E2 ubiquitin-conjugating enzyme]-L-cysteine + [acceptor protein]-L-lysine = [E2 ubiquitin-conjugating enzyme]-L-cysteine + N(6)-ubiquitinyl-[acceptor protein]-L-lysine.. It participates in protein modification; protein ubiquitination. Functionally, E3 ubiquitin-protein ligase that regulates cell proliferation. Involved in apoptosis regulation. Mediates ER stress-induced activation of JNK signaling pathway and apoptosis by promoting ERN1 activation and splicing of XBP1 mRNA. Also involved in protein trafficking and localization. This chain is E3 ubiquitin-protein ligase RNF13 (Rnf13), found in Rattus norvegicus (Rat).